Consider the following 264-residue polypeptide: MRPLLGLLLVFAGCTFALYLLSTRLPRGRRLGSTEEAGGRSLWFPSDLAELRELSEVLREYRKEHQAYVFLLFCGAYLYKQGFAIPGSSFLNVLAGALFGPWLGLLLCCVLTSVGATCCYLLSSIFGKQLVVSYFPDKVALLQRKVEENRNSLFFFLLFLRLFPMTPNWFLNLSAPILNIPIVQFFFSVLIGLIPYNFICVQTGSILSTLTSLDALFSWDTVFKLLAIAMVALIPGTLIKKFSQKHLQLNETSTANHIHSRKDT.

Residues 1–17 form the signal peptide; it reads MRPLLGLLLVFAGCTFA. 5 helical membrane-spanning segments follow: residues 67–87, 100–122, 153–173, 175–195, and 219–239; these read AYVF…AIPG, GPWL…CYLL, LFFF…FLNL, APIL…GLIP, and WDTV…GTLI. The VTT domain stretch occupies residues 96-207; it reads GALFGPWLGL…FICVQTGSIL (112 aa). Residue Asn250 is glycosylated (N-linked (GlcNAc...) asparagine).

Belongs to the TMEM41 family.

It localises to the membrane. The chain is Transmembrane protein 41A (TMEM41A) from Homo sapiens (Human).